The sequence spans 275 residues: MGIKKFKPTTPSRRHMTTMSFEEITKQEPEKSLIAPLKRKAGRNVKGRITVRHRGGGHKRQYRIVDFRRVKDNVPARVAAIEYDPNRSAHIALLHYFDGHKAYIIAPHNLRVGDVIESGPNADIKTGNTLPLKDIPVGSLIHNIELRPGKGAQLVRSAGAVAQLMAKEGAYAHVRLPSGEVRLIHVNCRATIGQVGNLEHENMTLGKAGRSRWLGIRPGVRGSVMNPTDHPHGGGEGRAPIGRKYPVSPWGKIAIGGKTRRKKPSDNMIVRKRKP.

Disordered regions lie at residues 222-243 and 256-275; these read GSVM…PIGR and GGKT…KRKP.

The protein belongs to the universal ribosomal protein uL2 family. Part of the 50S ribosomal subunit. Forms a bridge to the 30S subunit in the 70S ribosome.

Its function is as follows. One of the primary rRNA binding proteins. Required for association of the 30S and 50S subunits to form the 70S ribosome, for tRNA binding and peptide bond formation. It has been suggested to have peptidyltransferase activity; this is somewhat controversial. Makes several contacts with the 16S rRNA in the 70S ribosome. This is Large ribosomal subunit protein uL2 from Syntrophomonas wolfei subsp. wolfei (strain DSM 2245B / Goettingen).